We begin with the raw amino-acid sequence, 46 residues long: Defensin-like protein AX2 (46 aa).

Intrachain disulfides connect C3/C46, C14/C34, C20/C40, and C24/C42.

In terms of tissue distribution, leaves and flowers.

Its function is as follows. Strong inhibiting activity against C.beticola and other filamentous fungi. Little or no effect against bacteria. The polypeptide is Defensin-like protein AX2 (Beta vulgaris (Sugar beet)).